A 156-amino-acid polypeptide reads, in one-letter code: Snaclec stejaggregin-B subunit alpha (156 aa).

Residues 1–23 (MGRFISVSFGLLVVFLSLSGTGA) form the signal peptide. Intrachain disulfides connect cysteine 25–cysteine 36, cysteine 53–cysteine 150, and cysteine 125–cysteine 142. Residues 32–151 (FKQYCYQIIK…CEQKHLFMCK (120 aa)) form the C-type lectin domain.

This sequence belongs to the snaclec family. Heteromultimer; disulfide-linked. In terms of tissue distribution, expressed by the venom gland.

The protein resides in the secreted. Interferes with one step of hemostasis (modulation of platelet aggregation, or coagulation cascade, for example). In Trimeresurus stejnegeri (Chinese green tree viper), this protein is Snaclec stejaggregin-B subunit alpha.